We begin with the raw amino-acid sequence, 176 residues long: MLMPKKNRIAIHELLFKEGVMVAKKDVHMPKHPELADKNVPNLHVMKAMQSLKSRGCVKEQFAWRHFYWYLTNEGSQYLRDYLHLPPEIVPATLHLPPEIVPATLHRSRPETGRPRPKGLEGKRPARLTRREADRDTYRRCSVPPGADKKAEAGAGSATEFQFRGRCGRGRGQPPQ.

The segment at 104–176 is disordered; that stretch reads TLHRSRPETG…CGRGRGQPPQ (73 aa). The span at 108–139 shows a compositional bias: basic and acidic residues; it reads SRPETGRPRPKGLEGKRPARLTRREADRDTYR.

It belongs to the eukaryotic ribosomal protein eS10 family.

The protein is Putative ribosomal protein eS10-like (RPS10P5) of Homo sapiens (Human).